We begin with the raw amino-acid sequence, 442 residues long: GPI mannosyltransferase 1 (442 aa).

8 helical membrane passes run 22 to 42, 95 to 115, 177 to 197, 242 to 262, 307 to 327, 336 to 356, 361 to 381, and 408 to 428; these read INLT…LIVF, ILIH…IIAY, LASI…IYSI, AFTF…IFLF, MIVA…ITLV, LLLE…QYFI, ILPL…ILFA, and IWVA…KLIL.

This sequence belongs to the PIGM family.

The protein localises to the endoplasmic reticulum membrane. It functions in the pathway glycolipid biosynthesis; glycosylphosphatidylinositol-anchor biosynthesis. Mannosyltransferase involved in glycosylphosphatidylinositol-anchor biosynthesis. Transfers the first alpha-1,4-mannose to GlcN-acyl-PI during GPI precursor assembly. The protein is GPI mannosyltransferase 1 (pigm) of Dictyostelium discoideum (Social amoeba).